A 1008-amino-acid chain; its full sequence is Histone deacetylase complex subunit SAP130-A (1008 aa).

Residues 1–31 are compositionally biased toward polar residues; it reads MNSQQFPRQAASMPSPQVSNSGASVGQNVQG. Disordered stretches follow at residues 1–44, 113–134, 415–435, and 617–720; these read MNSQ…DVQS, SKST…SAVP, IQSD…HRAS, and TPGG…PATI. The segment covering 35–44 has biased composition (basic and acidic residues); that stretch reads EVARDMDVQS. Polar residues predominate over residues 618 to 644; it reads PGGTTVMQSHSQSPGIGSSPAQGSSPR. Residues 678–697 are compositionally biased toward low complexity; it reads ADQPSAAASLPSSHHPAAAV.

The protein belongs to the SAP130 family.

It is found in the nucleus. Functionally, acts as a transcriptional repressor. The protein is Histone deacetylase complex subunit SAP130-A (sap130-a) of Xenopus laevis (African clawed frog).